A 125-amino-acid polypeptide reads, in one-letter code: U11-myrmicitoxin-Ta1a (125 aa).

Positions 1–21 are cleaved as a signal peptide; it reads MKTVIFILGFAFVAILIPTNG. Positions 22 to 91 are excised as a propeptide; the sequence is ESMADADAMA…RAMAAAYAAA (70 aa). A disulfide bond links C101 and C124.

The protein belongs to the formicidae venom precursor-01 superfamily. As to expression, expressed by the venom gland.

It localises to the secreted. Its subcellular location is the target cell membrane. In terms of biological role, neurotoxin that causes irreversible rapid flaccid paralysis in blowflies and honeybees upon intrathoracic injection. Causes a quick and irreversible cytolytic effect (at 10 uM) indicating it possibly acts as a pore-forming peptide. Shows only weak effect on aphids (A.pisum) at high doses 24 hours post intrathoracic injection. In vitro, is not cytotoxic on the dipteran S2 Drosophila embryonic cell line. This chain is U11-myrmicitoxin-Ta1a, found in Tetramorium africanum (Fierce ant).